The following is a 190-amino-acid chain: Dual specificity protein phosphatase 21 (190 aa).

The Tyrosine-protein phosphatase domain occupies 21 to 162 (SFSQITRSLF…LINYEFKLFN (142 aa)). Residues 43-128 (LSSNRITAIV…AYLMKYHSMS (86 aa)) are sufficient for mitochondrial localization. The active-site Phosphocysteine intermediate is the Cys-106.

This sequence belongs to the protein-tyrosine phosphatase family. Non-receptor class dual specificity subfamily. In terms of assembly, microtubule inner protein component of sperm flagellar doublet microtubules. In terms of tissue distribution, expressed in testis.

The protein localises to the cytoplasm. The protein resides in the nucleus. Its subcellular location is the mitochondrion inner membrane. It is found in the cytoskeleton. It localises to the flagellum axoneme. It carries out the reaction O-phospho-L-tyrosyl-[protein] + H2O = L-tyrosyl-[protein] + phosphate. The catalysed reaction is O-phospho-L-seryl-[protein] + H2O = L-seryl-[protein] + phosphate. The enzyme catalyses O-phospho-L-threonyl-[protein] + H2O = L-threonyl-[protein] + phosphate. Its function is as follows. Protein phosphatase component of the sperm flagellar doublet microtubules. May act as a regulator of sperm motility by mediating dephosphorylation of sperm doublet microtubule proteins. Can dephosphorylate single and diphosphorylated synthetic MAPK peptides, with preference for the phosphotyrosine and diphosphorylated forms over phosphothreonine. The polypeptide is Dual specificity protein phosphatase 21 (DUSP21) (Homo sapiens (Human)).